Here is a 154-residue protein sequence, read N- to C-terminus: Endoribonuclease YbeY (154 aa).

Residues histidine 113, histidine 117, and histidine 123 each coordinate Zn(2+).

It belongs to the endoribonuclease YbeY family. The cofactor is Zn(2+).

The protein localises to the cytoplasm. Single strand-specific metallo-endoribonuclease involved in late-stage 70S ribosome quality control and in maturation of the 3' terminus of the 16S rRNA. The chain is Endoribonuclease YbeY from Vibrio parahaemolyticus serotype O3:K6 (strain RIMD 2210633).